Reading from the N-terminus, the 409-residue chain is Transcription termination factor 3, mitochondrial (409 aa).

Residues 1-64 constitute a mitochondrion transit peptide; sequence MALLAQQLSR…KTDRALFSWS (64 aa). The disordered stretch occupies residues 74–93; sequence RKSSTNSTLLPSVSEQPEKI.

It belongs to the mTERF family.

It localises to the mitochondrion. Its function is as follows. Binds promoter DNA and regulates initiation of transcription. Required for normal mitochondrial transcription and translation, and for normal assembly of mitochondrial respiratory complexes. Required for normal mitochondrial function. Maintains 16S rRNA levels and functions in mitochondrial ribosome assembly by regulating the biogenesis of the 39S ribosomal subunit. This chain is Transcription termination factor 3, mitochondrial (Mterf3), found in Rattus norvegicus (Rat).